We begin with the raw amino-acid sequence, 353 residues long: Ferredoxin--NADP reductase (353 aa).

Residues D33, Q41, Y46, V86, F121, D293, and T333 each contribute to the FAD site.

Belongs to the ferredoxin--NADP reductase type 2 family. In terms of assembly, homodimer. FAD is required as a cofactor.

It catalyses the reaction 2 reduced [2Fe-2S]-[ferredoxin] + NADP(+) + H(+) = 2 oxidized [2Fe-2S]-[ferredoxin] + NADPH. This Verminephrobacter eiseniae (strain EF01-2) protein is Ferredoxin--NADP reductase.